Consider the following 267-residue polypeptide: Undecaprenyl-diphosphatase (267 aa).

8 consecutive transmembrane segments (helical) span residues Met-1–Ile-21, Gln-39–Phe-59, Trp-87–Ile-107, Leu-111–Val-131, Ala-149–Ile-169, Phe-189–Leu-209, Phe-218–Leu-238, and Met-246–Leu-266.

This sequence belongs to the UppP family.

It is found in the cell inner membrane. The enzyme catalyses di-trans,octa-cis-undecaprenyl diphosphate + H2O = di-trans,octa-cis-undecaprenyl phosphate + phosphate + H(+). Its function is as follows. Catalyzes the dephosphorylation of undecaprenyl diphosphate (UPP). Confers resistance to bacitracin. This Aliivibrio salmonicida (strain LFI1238) (Vibrio salmonicida (strain LFI1238)) protein is Undecaprenyl-diphosphatase.